We begin with the raw amino-acid sequence, 683 residues long: Protein hook (683 aa).

The region spanning 5 to 123 (NGMYYSLLEW…RLLQLVLGCA (119 aa)) is the Calponin-homology (CH) domain. 2 coiled-coil regions span residues 135–440 (EIMC…LKCG) and 484–594 (QTAL…AKEV).

This sequence belongs to the hook family. Homodimer. Interacts with microtubules via its N-terminus.

Its subcellular location is the cytoplasm. It is found in the cytoskeleton. The protein resides in the endosome. It localises to the synapse. Its function is as follows. Involved in endocytic trafficking by stabilizing organelles of the endocytic pathway. Probably acts as a cytoskeletal linker protein required to tether endosome vesicles to the cytoskeleton. Involved in modulation of endocytosis at stages required for down-regulation of membrane proteins that control synapse size. Not involved in synaptic vesicle recycling. Required in R7 cells for boss endocytosis into multivesicular bodies (MVBs). Has a role in regulating adult longevity. This Drosophila grimshawi (Hawaiian fruit fly) protein is Protein hook.